We begin with the raw amino-acid sequence, 516 residues long: Anaerobic nitric oxide reductase transcription regulator NorR (516 aa).

Asp-57 carries the post-translational modification 4-aspartylphosphate. In terms of domain architecture, Sigma-54 factor interaction spans 187–416; sequence IIGLSAPMLQ…LEHAIHRAVV (230 aa). Residues 215–222 and 278–287 contribute to the ATP site; these read GETGTGKE and ADNGTLFLDE. Residues 482-501 constitute a DNA-binding region (H-T-H motif); the sequence is WAATARALELDVANLHRLAK.

It participates in nitrogen metabolism; nitric oxide reduction. In terms of biological role, required for the expression of anaerobic nitric oxide (NO) reductase, acts as a transcriptional activator for at least the norVW operon. Activation also requires sigma-54. This is Anaerobic nitric oxide reductase transcription regulator NorR from Klebsiella pneumoniae (strain 342).